The sequence spans 203 residues: Glycerol-3-phosphate acyltransferase (203 aa).

4 helical membrane-spanning segments follow: residues 4–24 (LVLL…AVLI), 80–100 (PFLL…PIFF), 116–136 (APIG…TVFI), and 138–158 (GYSS…TWFV).

This sequence belongs to the PlsY family. As to quaternary structure, probably interacts with PlsX.

It is found in the cell inner membrane. The enzyme catalyses an acyl phosphate + sn-glycerol 3-phosphate = a 1-acyl-sn-glycero-3-phosphate + phosphate. It functions in the pathway lipid metabolism; phospholipid metabolism. In terms of biological role, catalyzes the transfer of an acyl group from acyl-phosphate (acyl-PO(4)) to glycerol-3-phosphate (G3P) to form lysophosphatidic acid (LPA). This enzyme utilizes acyl-phosphate as fatty acyl donor, but not acyl-CoA or acyl-ACP. The polypeptide is Glycerol-3-phosphate acyltransferase (Photobacterium profundum (strain SS9)).